The chain runs to 831 residues: Valine--tRNA ligase (831 aa).

The 'HIGH' region motif lies at 77-87; it reads PFTSGELHMGH. A 'KMSKS' region motif is present at residues 564–568; it reads RMSKS. Residue K567 coordinates ATP.

Belongs to the class-I aminoacyl-tRNA synthetase family. ValS type 2 subfamily.

It localises to the cytoplasm. The catalysed reaction is tRNA(Val) + L-valine + ATP = L-valyl-tRNA(Val) + AMP + diphosphate. Its function is as follows. Catalyzes the attachment of valine to tRNA(Val). As ValRS can inadvertently accommodate and process structurally similar amino acids such as threonine, to avoid such errors, it has a 'posttransfer' editing activity that hydrolyzes mischarged Thr-tRNA(Val) in a tRNA-dependent manner. In Sulfolobus acidocaldarius (strain ATCC 33909 / DSM 639 / JCM 8929 / NBRC 15157 / NCIMB 11770), this protein is Valine--tRNA ligase.